Here is a 136-residue protein sequence, read N- to C-terminus: Histone H3.3 (136 aa).

The segment at 1 to 42 (MARTKQTARKSTGGKAPRKQLASKAARKSAPVSGGVKKPHRY) is disordered. Lys-5 carries the N6,N6,N6-trimethyllysine; alternate modification. An N6,N6-dimethyllysine; alternate modification is found at Lys-5. Residues Lys-5 and Lys-10 each carry the N6-methyllysine; alternate modification. Residue Lys-10 is modified to N6-acetyllysine; alternate. At Ser-11 the chain carries Phosphoserine. Position 15 is an N6,N6-dimethyllysine; alternate (Lys-15). An N6-acetyllysine; alternate mark is found at Lys-15, Lys-19, Lys-24, Lys-28, and Lys-37. Residues Lys-19, Lys-24, Lys-28, and Lys-37 each carry the N6-methyllysine; alternate modification. 2 positions are modified to N6,N6,N6-trimethyllysine; alternate: Lys-28 and Lys-37. Residues Lys-28 and Lys-37 each carry the N6,N6-dimethyllysine; alternate modification. N6-acetyllysine is present on residues Lys-57 and Lys-65. The residue at position 80 (Lys-80) is an N6,N6,N6-trimethyllysine; alternate. Residue Lys-80 is modified to N6,N6-dimethyllysine; alternate. Lys-80 carries the post-translational modification N6-methyllysine; alternate.

The protein belongs to the histone H3 family. As to quaternary structure, the nucleosome is a histone octamer containing two molecules each of H2A, H2B, H3 and H4 assembled in one H3-H4 heterotetramer and two H2A-H2B heterodimers. The octamer wraps approximately 147 bp of DNA. In terms of processing, phosphorylated by IPL1 to form H3S10ph. H3S10ph promotes subsequent H3K14ac formation by GCN5 and is required for transcriptional activation through TBP recruitment to the promoters. Mono-, di- and trimethylated by the COMPASS complex to form H3K4me1/2/3. H3K4me activates gene expression by regulating transcription elongation and plays a role in telomere length maintenance. H3K4me enrichment correlates with transcription levels, and occurs in a 5' to 3' gradient with H3K4me3 enrichment at the 5'-end of genes, shifting to H3K4me2 and then H3K4me1. Methylated by SET2 to form H3K36me. H3K36me represses gene expression. Methylated by DOT1 to form H3K79me. H3K79me is required for association of SIR proteins with telomeric regions and for telomeric silencing. The COMPASS-mediated formation of H3K4me2/3 and the DOT1-mediated formation of H3K79me require H2BK123ub1. Post-translationally, acetylation of histone H3 leads to transcriptional activation. H3K14ac formation by GCN5 is promoted by H3S10ph. H3K14ac can also be formed by ESA1. H3K56ac formation occurs predominantly in newly synthesized H3 molecules during G1, S and G2/M of the cell cycle and may be involved in DNA repair.

It is found in the nucleus. The protein resides in the chromosome. Functionally, core component of nucleosome. Nucleosomes wrap and compact DNA into chromatin, limiting DNA accessibility to the cellular machineries which require DNA as a template. Histones thereby play a central role in transcription regulation, DNA repair, DNA replication and chromosomal stability. DNA accessibility is regulated via a complex set of post-translational modifications of histones, also called histone code, and nucleosome remodeling. In Debaryomyces hansenii (strain ATCC 36239 / CBS 767 / BCRC 21394 / JCM 1990 / NBRC 0083 / IGC 2968) (Yeast), this protein is Histone H3.3 (HHT3).